A 118-amino-acid polypeptide reads, in one-letter code: V-type proton ATPase subunit G 1 (118 aa).

Alanine 2 bears the N-acetylalanine mark. Positions 25–90 (ARKRKARRLK…VQGMQSSQQR (66 aa)) are disordered. Residues 35 to 56 (QAKEEAQMEVEQYRREREHEFQ) show a composition bias toward basic and acidic residues. 2 stretches are compositionally biased toward polar residues: residues 57–69 (SKQQ…QGNL) and 78–89 (RHQVQGMQSSQQ).

Belongs to the V-ATPase G subunit family. V-ATPase is a heteromultimeric enzyme made up of two complexes: the ATP-hydrolytic V1 complex and the proton translocation V0 complex. The V1 complex consists of three catalytic AB heterodimers that form a heterohexamer, three peripheral stalks each consisting of EG heterodimers, one central rotor including subunits D and F, and the regulatory subunits C and H. The proton translocation complex V0 consists of the proton transport subunit a, a ring of proteolipid subunits c9c'', rotary subunit d, subunits e and f, and the accessory subunits ATP6AP1/Ac45 and ATP6AP2/PRR.

It localises to the apical cell membrane. In terms of biological role, subunit of the V1 complex of vacuolar(H+)-ATPase (V-ATPase), a multisubunit enzyme composed of a peripheral complex (V1) that hydrolyzes ATP and a membrane integral complex (V0) that translocates protons. V-ATPase is responsible for acidifying and maintaining the pH of intracellular compartments and in some cell types, is targeted to the plasma membrane, where it is responsible for acidifying the extracellular environment. In aerobic conditions, involved in intracellular iron homeostasis, thus triggering the activity of Fe(2+) prolyl hydroxylase (PHD) enzymes, and leading to HIF1A hydroxylation and subsequent proteasomal degradation. In Pan troglodytes (Chimpanzee), this protein is V-type proton ATPase subunit G 1 (ATP6V1G1).